The primary structure comprises 462 residues: GTPase Der (462 aa).

EngA-type G domains lie at 9-171 (KTIA…GLTK) and 201-372 (IQVG…ECFS). GTP-binding positions include 15 to 22 (GQPNVGKS), 62 to 66 (DTGGM), 123 to 126 (NKID), 207 to 214 (GRVNVGKS), 254 to 258 (DTAGI), and 318 to 321 (NKWD). In terms of domain architecture, KH-like spans 373–457 (KRIPTSLLNS…PLIINAKDKK (85 aa)).

It belongs to the TRAFAC class TrmE-Era-EngA-EngB-Septin-like GTPase superfamily. EngA (Der) GTPase family. Associates with the 50S ribosomal subunit.

In terms of biological role, GTPase that plays an essential role in the late steps of ribosome biogenesis. The sequence is that of GTPase Der from Helicobacter acinonychis (strain Sheeba).